Here is a 127-residue protein sequence, read N- to C-terminus: Fluoride-specific ion channel FluC (127 aa).

Helical transmembrane passes span 4–24 and 36–56; these read WFWIGLGGAAGTLARYGLSTW and GTLAVNVIGSFLLGAIGEIAA. 2 residues coordinate Na(+): G75 and T78. Residues 100-120 traverse the membrane as a helical segment; the sequence is LANIAITLVVCLLAGVLGMVV.

Belongs to the fluoride channel Fluc/FEX (TC 1.A.43) family.

It is found in the cell inner membrane. The catalysed reaction is fluoride(in) = fluoride(out). Na(+) is not transported, but it plays an essential structural role and its presence is essential for fluoride channel function. Its function is as follows. Fluoride-specific ion channel. Important for reducing fluoride concentration in the cell, thus reducing its toxicity. The sequence is that of Fluoride-specific ion channel FluC from Sorangium cellulosum (strain So ce56) (Polyangium cellulosum (strain So ce56)).